The sequence spans 301 residues: ATP synthase gamma chain (301 aa).

This sequence belongs to the ATPase gamma chain family. F-type ATPases have 2 components, CF(1) - the catalytic core - and CF(0) - the membrane proton channel. CF(1) has five subunits: alpha(3), beta(3), gamma(1), delta(1), epsilon(1). CF(0) has three main subunits: a, b and c.

The protein resides in the cell inner membrane. Produces ATP from ADP in the presence of a proton gradient across the membrane. The gamma chain is believed to be important in regulating ATPase activity and the flow of protons through the CF(0) complex. The sequence is that of ATP synthase gamma chain from Bordetella bronchiseptica (strain ATCC BAA-588 / NCTC 13252 / RB50) (Alcaligenes bronchisepticus).